Reading from the N-terminus, the 378-residue chain is Probable mannosyltransferase MNT3 (378 aa).

Residues 1–4 (MLWH) are Cytoplasmic-facing. A helical; Signal-anchor for type II membrane protein membrane pass occupies residues 5-25 (LVFILIAILLLTFSPKIESLF). Topologically, residues 26-378 (KSFTINKPTK…TNHFLNILHN (353 aa)) are lumenal. N-linked (GlcNAc...) asparagine glycosylation is found at Asn73 and Asn149.

The protein belongs to the glycosyltransferase 15 family.

The protein localises to the membrane. Transfers an alpha-D-mannosyl residue from GDP-mannose into lipid-linked oligosaccharide, forming an alpha-(1-&gt;2)-D-mannosyl-D-mannose linkage. The polypeptide is Probable mannosyltransferase MNT3 (MNT3) (Candida albicans (strain SC5314 / ATCC MYA-2876) (Yeast)).